We begin with the raw amino-acid sequence, 336 residues long: tRNA N6-adenosine threonylcarbamoyltransferase (336 aa).

3 residues coordinate Fe cation: histidine 115, histidine 119, and tyrosine 136. Residues tyrosine 136–glycine 140, aspartate 168, glutamate 185, and serine 266 contribute to the substrate site. Aspartate 294 contributes to the Fe cation binding site.

This sequence belongs to the KAE1 / TsaD family. It depends on Fe(2+) as a cofactor.

Its subcellular location is the cytoplasm. The catalysed reaction is L-threonylcarbamoyladenylate + adenosine(37) in tRNA = N(6)-L-threonylcarbamoyladenosine(37) in tRNA + AMP + H(+). Its function is as follows. Required for the formation of a threonylcarbamoyl group on adenosine at position 37 (t(6)A37) in tRNAs that read codons beginning with adenine. Is probably involved in the transfer of the threonylcarbamoyl moiety of threonylcarbamoyl-AMP (TC-AMP) to the N6 group of A37. This is tRNA N6-adenosine threonylcarbamoyltransferase from Thermofilum pendens (strain DSM 2475 / Hrk 5).